The chain runs to 453 residues: Putative receptor-like protein kinase At2g30940 (453 aa).

The chain crosses the membrane as a helical span at residues 60–80 (ASASIAFLLVLIISVLLCFIF). Residue threonine 155 is modified to Phosphothreonine. Positions 166-428 (FADDNVITKG…IHMLQPHDLL (263 aa)) constitute a Protein kinase domain. Residues 172–180 (ITKGDSSTV) and lysine 194 contribute to the ATP site. Tyrosine 240 is subject to Phosphotyrosine. Aspartate 293 functions as the Proton acceptor in the catalytic mechanism. Serine 297 carries the phosphoserine modification. Residue threonine 322 is modified to Phosphothreonine.

Belongs to the protein kinase superfamily.

The protein localises to the cell membrane. The enzyme catalyses L-seryl-[protein] + ATP = O-phospho-L-seryl-[protein] + ADP + H(+). The catalysed reaction is L-threonyl-[protein] + ATP = O-phospho-L-threonyl-[protein] + ADP + H(+). This Arabidopsis thaliana (Mouse-ear cress) protein is Putative receptor-like protein kinase At2g30940.